Consider the following 569-residue polypeptide: Endonuclease/exonuclease/phosphatase family domain-containing protein 1 (569 aa).

A disordered region spans residues 1–20 (MGSTLGCHRSIPRDPSDLSH). Glycine 2 carries the N-myristoyl glycine lipid modification. The segment covering 11-20 (IPRDPSDLSH) has biased composition (basic and acidic residues). Residues serine 16, serine 21, and serine 25 each carry the phosphoserine modification. One can recognise a HhH domain in the interval 38–67 (ERLNINTATEEELMTLPGVTRAVARSIVEY). Phosphoserine occurs at positions 106, 110, 160, and 173. A disordered region spans residues 200–224 (SRPPSTHTNGGLTFTAKPHPSPTSL). Residues 202-211 (PPSTHTNGGL) are compositionally biased toward polar residues. Residue threonine 265 is modified to Phosphothreonine. The segment at 548-569 (EVPRNGNGVTLEPSEANVKHER) is disordered.

This chain is Endonuclease/exonuclease/phosphatase family domain-containing protein 1 (Eepd1), found in Rattus norvegicus (Rat).